Here is a 669-residue protein sequence, read N- to C-terminus: DNA mismatch repair protein MutL (669 aa).

2 disordered regions span residues 354–402 (NRPA…ENPY) and 448–479 (TVSHDSPPNRTAPDATTSSSKPRAPIESPLES). Over residues 448 to 468 (TVSHDSPPNRTAPDATTSSSK) the composition is skewed to polar residues.

Belongs to the DNA mismatch repair MutL/HexB family.

Functionally, this protein is involved in the repair of mismatches in DNA. It is required for dam-dependent methyl-directed DNA mismatch repair. May act as a 'molecular matchmaker', a protein that promotes the formation of a stable complex between two or more DNA-binding proteins in an ATP-dependent manner without itself being part of a final effector complex. The protein is DNA mismatch repair protein MutL of Pectobacterium carotovorum subsp. carotovorum (strain PC1).